Here is a 298-residue protein sequence, read N- to C-terminus: Acetyl-coenzyme A carboxylase carboxyl transferase subunit beta (298 aa).

The segment at 1–21 (MNQEVKSGKVLSPSTPWTQRP) is disordered. A C4-type zinc finger spans residues 20–67 (RPVPGIEVADEQQTLKATFTEPTIECPECHALVTRTAISFNAYVCPQC). The CoA carboxyltransferase N-terminal domain maps to 41-298 (PTIECPECHA…RLVSKLMNLP (258 aa)). Residues Cys-45, Cys-48, Cys-64, and Cys-67 each contribute to the Zn(2+) site.

The protein belongs to the AccD/PCCB family. In terms of assembly, acetyl-CoA carboxylase is a heterohexamer composed of biotin carboxyl carrier protein (AccB), biotin carboxylase (AccC) and two subunits each of ACCase subunit alpha (AccA) and ACCase subunit beta (AccD). It depends on Zn(2+) as a cofactor.

The protein resides in the cytoplasm. It catalyses the reaction N(6)-carboxybiotinyl-L-lysyl-[protein] + acetyl-CoA = N(6)-biotinyl-L-lysyl-[protein] + malonyl-CoA. Its pathway is lipid metabolism; malonyl-CoA biosynthesis; malonyl-CoA from acetyl-CoA: step 1/1. In terms of biological role, component of the acetyl coenzyme A carboxylase (ACC) complex. Biotin carboxylase (BC) catalyzes the carboxylation of biotin on its carrier protein (BCCP) and then the CO(2) group is transferred by the transcarboxylase to acetyl-CoA to form malonyl-CoA. This is Acetyl-coenzyme A carboxylase carboxyl transferase subunit beta from Acinetobacter baumannii (strain SDF).